Consider the following 352-residue polypeptide: Mas-related G-protein coupled receptor member X2 (352 aa).

The Extracellular portion of the chain corresponds to 1–45 (MEERNISGRDLRVDSNITYWGTNITAVNESNHTGMSFCEVVSCTM). N-linked (GlcNAc...) asparagine glycans are attached at residues Asn5, Asn16, Asn23, Asn28, and Asn31. A helical membrane pass occupies residues 46–66 (VFLSLIVALVGLVGNATVLWF). At 67 to 75 (LGFQMRRNA) the chain is on the cytoplasmic side. Residues 76-96 (FSVYILNLAGADFLFICFQIG) traverse the membrane as a helical segment. At 97–107 (YCFHMILDIDS) the chain is on the extracellular side. The chain crosses the membrane as a helical span at residues 108–128 (IPIEIDLFYLVVLNFPYFCGL). The Cytoplasmic segment spans residues 129–155 (SILSAISIERCLSVMWPIWYHCQRPRH). Residues 156 to 176 (TSAVICTLLWVLSLVCSLLEG) form a helical membrane-spanning segment. The Extracellular segment spans residues 177-195 (KECGFLYYTSDPGWCKTFD). Residues 196–216 (LITATWLIVLFVALLGSSLAL) traverse the membrane as a helical segment. At 217-239 (VITIFWGLHKIPVTRLYVAIVFT) the chain is on the cytoplasmic side. The helical transmembrane segment at 240-260 (VLVFLLFGLPYGIYWFLLVWI) threads the bilayer. Over 261-275 (EKFYYVLPCSIYPVT) the chain is Extracellular. Residues 276-296 (VFLSCVNSSAKPIIYCLVGSI) traverse the membrane as a helical segment. The Cytoplasmic segment spans residues 297–347 (RHHRFQRKTLKLFLQRAMQDTPEEEECGEMGSSGRSREIKTIWKGLRAALI).

The protein belongs to the G-protein coupled receptor 1 family. Mas subfamily.

It localises to the cell membrane. Orphan receptor. Probably involved in the function of nociceptive neurons. May regulate nociceptor function and/or development, including the sensation or modulation of pain. The chain is Mas-related G-protein coupled receptor member X2 (Mrgprx2) from Mus musculus (Mouse).